The sequence spans 294 residues: Lipoyl synthase (294 aa).

Residues cysteine 35, cysteine 40, cysteine 46, cysteine 61, cysteine 65, cysteine 68, and serine 273 each contribute to the [4Fe-4S] cluster site. Residues 47-262 enclose the Radical SAM core domain; the sequence is FRQRQATFLI…REQALSMGFE (216 aa).

This sequence belongs to the radical SAM superfamily. Lipoyl synthase family. The cofactor is [4Fe-4S] cluster.

It is found in the cytoplasm. The enzyme catalyses [[Fe-S] cluster scaffold protein carrying a second [4Fe-4S](2+) cluster] + N(6)-octanoyl-L-lysyl-[protein] + 2 oxidized [2Fe-2S]-[ferredoxin] + 2 S-adenosyl-L-methionine + 4 H(+) = [[Fe-S] cluster scaffold protein] + N(6)-[(R)-dihydrolipoyl]-L-lysyl-[protein] + 4 Fe(3+) + 2 hydrogen sulfide + 2 5'-deoxyadenosine + 2 L-methionine + 2 reduced [2Fe-2S]-[ferredoxin]. It participates in protein modification; protein lipoylation via endogenous pathway; protein N(6)-(lipoyl)lysine from octanoyl-[acyl-carrier-protein]: step 2/2. Functionally, catalyzes the radical-mediated insertion of two sulfur atoms into the C-6 and C-8 positions of the octanoyl moiety bound to the lipoyl domains of lipoate-dependent enzymes, thereby converting the octanoylated domains into lipoylated derivatives. In Geotalea daltonii (strain DSM 22248 / JCM 15807 / FRC-32) (Geobacter daltonii), this protein is Lipoyl synthase.